A 178-amino-acid chain; its full sequence is dCTP deaminase, dUMP-forming (178 aa).

DCTP contacts are provided by residues 96–101, Asp-113, 121–123, Gln-142, Tyr-156, and Gln-163; these read RSSLGR and TLE. The active-site Proton donor/acceptor is Glu-123.

It belongs to the dCTP deaminase family. In terms of assembly, homotrimer.

The enzyme catalyses dCTP + 2 H2O = dUMP + NH4(+) + diphosphate. It participates in pyrimidine metabolism; dUMP biosynthesis; dUMP from dCTP: step 1/1. Its function is as follows. Bifunctional enzyme that catalyzes both the deamination of dCTP to dUTP and the hydrolysis of dUTP to dUMP without releasing the toxic dUTP intermediate. The sequence is that of dCTP deaminase, dUMP-forming from Acetivibrio thermocellus (strain ATCC 27405 / DSM 1237 / JCM 9322 / NBRC 103400 / NCIMB 10682 / NRRL B-4536 / VPI 7372) (Clostridium thermocellum).